The primary structure comprises 176 residues: Warthog protein 5 (176 aa).

The N-terminal stretch at 1 to 21 (MCSMWLMASWLMAFVAGSTLA) is a signal peptide. An N-linked (GlcNAc...) asparagine glycan is attached at Asn70.

In terms of tissue distribution, expressed in seam cells, excretory cell, reproductive system, pharynx, pharyngeal-intestinal valve cells, neurons and neuronal support cells.

It localises to the secreted. Its function is as follows. Intercellular signal essential for a variety of patterning events during development. This is Warthog protein 5 (wrt-5) from Caenorhabditis elegans.